The primary structure comprises 410 residues: Argininosuccinate synthase (410 aa).

Residues 13 to 21 (AYSGGLDTS) and Ala-40 contribute to the ATP site. L-citrulline-binding residues include Tyr-91 and Ser-96. Gly-121 is an ATP binding site. Residues Thr-123, Asn-127, and Asp-128 each coordinate L-aspartate. Position 127 (Asn-127) interacts with L-citrulline. Residues Arg-131, Ser-182, Ser-191, Glu-267, and Tyr-279 each coordinate L-citrulline.

It belongs to the argininosuccinate synthase family. Type 1 subfamily. Homotetramer.

Its subcellular location is the cytoplasm. It carries out the reaction L-citrulline + L-aspartate + ATP = 2-(N(omega)-L-arginino)succinate + AMP + diphosphate + H(+). It functions in the pathway amino-acid biosynthesis; L-arginine biosynthesis; L-arginine from L-ornithine and carbamoyl phosphate: step 2/3. This Gluconobacter oxydans (strain 621H) (Gluconobacter suboxydans) protein is Argininosuccinate synthase.